The chain runs to 228 residues: Superoxide dismutase [Mn] (228 aa).

A signal peptide spans Met-1 to Ala-23. Residues His-49, His-100, Asp-188, and His-192 each coordinate Mn(2+).

It belongs to the iron/manganese superoxide dismutase family. Mn(2+) serves as cofactor.

It localises to the periplasm. It carries out the reaction 2 superoxide + 2 H(+) = H2O2 + O2. Functionally, destroys superoxide anion radicals which are normally produced within the cells and which are toxic to biological systems. The chain is Superoxide dismutase [Mn] (sodA) from Acinetobacter baylyi (strain ATCC 33305 / BD413 / ADP1).